We begin with the raw amino-acid sequence, 290 residues long: UPF0761 membrane protein CKO_03126 (290 aa).

6 consecutive transmembrane segments (helical) span residues 44–64 (LLSL…FPMF), 104–124 (VGAC…DSAL), 140–160 (FAVY…SLAI), 183–203 (VFPL…VPTT), 210–230 (AVVG…GFAL), and 244–264 (VLAV…IVLL).

The protein belongs to the UPF0761 family.

Its subcellular location is the cell inner membrane. The protein is UPF0761 membrane protein CKO_03126 of Citrobacter koseri (strain ATCC BAA-895 / CDC 4225-83 / SGSC4696).